The primary structure comprises 76 residues: Brevinin-2ISa (76 aa).

A signal peptide spans 1–22; it reads MFNMKKSLLLLFFLGTISLSLC. A propeptide spans 23 to 41 (removed in mature form); that stretch reads EEERDADEDDGVEMTEEEV. Cysteine 70 and cysteine 76 are disulfide-bonded.

In terms of tissue distribution, expressed by the skin glands.

Its subcellular location is the secreted. Has antimicrobial activity against Gram-negative bacterium E.coli ATCC 8739 (MIC=50 ug), against Gram positive bacteria S.aureus ATCC 6538 (MIC=12.5 ug), methicillin-resistant S.aureus ATCC 43300 (MIC=100 ug) and B.subtilis ATCC 6633 (MIC=12.5 ug). Has no activity against fungus C.albicans ATCC 90028. This chain is Brevinin-2ISa, found in Odorrana ishikawae (Ishikawa's frog).